We begin with the raw amino-acid sequence, 597 residues long: Lysine--tRNA ligase (597 aa).

Mg(2+) is bound by residues E501 and E508.

The protein belongs to the class-II aminoacyl-tRNA synthetase family. Homodimer. Requires Mg(2+) as cofactor.

It localises to the cytoplasm. It carries out the reaction tRNA(Lys) + L-lysine + ATP = L-lysyl-tRNA(Lys) + AMP + diphosphate. This chain is Lysine--tRNA ligase (lysS), found in Aquifex aeolicus (strain VF5).